The primary structure comprises 221 residues: Thiamine-phosphate synthase (221 aa).

4-amino-2-methyl-5-(diphosphooxymethyl)pyrimidine is bound by residues 44 to 48 (QLRLK) and N80. 2 residues coordinate Mg(2+): D81 and D100. T119 provides a ligand contact to 4-amino-2-methyl-5-(diphosphooxymethyl)pyrimidine. 146 to 148 (TTT) serves as a coordination point for 2-[(2R,5Z)-2-carboxy-4-methylthiazol-5(2H)-ylidene]ethyl phosphate. K149 contributes to the 4-amino-2-methyl-5-(diphosphooxymethyl)pyrimidine binding site. 2-[(2R,5Z)-2-carboxy-4-methylthiazol-5(2H)-ylidene]ethyl phosphate is bound at residue G176.

The protein belongs to the thiamine-phosphate synthase family. The cofactor is Mg(2+).

The enzyme catalyses 2-[(2R,5Z)-2-carboxy-4-methylthiazol-5(2H)-ylidene]ethyl phosphate + 4-amino-2-methyl-5-(diphosphooxymethyl)pyrimidine + 2 H(+) = thiamine phosphate + CO2 + diphosphate. It catalyses the reaction 2-(2-carboxy-4-methylthiazol-5-yl)ethyl phosphate + 4-amino-2-methyl-5-(diphosphooxymethyl)pyrimidine + 2 H(+) = thiamine phosphate + CO2 + diphosphate. The catalysed reaction is 4-methyl-5-(2-phosphooxyethyl)-thiazole + 4-amino-2-methyl-5-(diphosphooxymethyl)pyrimidine + H(+) = thiamine phosphate + diphosphate. It participates in cofactor biosynthesis; thiamine diphosphate biosynthesis; thiamine phosphate from 4-amino-2-methyl-5-diphosphomethylpyrimidine and 4-methyl-5-(2-phosphoethyl)-thiazole: step 1/1. Condenses 4-methyl-5-(beta-hydroxyethyl)thiazole monophosphate (THZ-P) and 2-methyl-4-amino-5-hydroxymethyl pyrimidine pyrophosphate (HMP-PP) to form thiamine monophosphate (TMP). The sequence is that of Thiamine-phosphate synthase from Hyphomonas neptunium (strain ATCC 15444).